Consider the following 72-residue polypeptide: Translation initiation factor IF-1 (72 aa).

An S1-like domain is found at 1 to 72 (MAKEDSIEMQ…SKGRIVFRAR (72 aa)).

Belongs to the IF-1 family. As to quaternary structure, component of the 30S ribosomal translation pre-initiation complex which assembles on the 30S ribosome in the order IF-2 and IF-3, IF-1 and N-formylmethionyl-tRNA(fMet); mRNA recruitment can occur at any time during PIC assembly.

The protein resides in the cytoplasm. Its function is as follows. One of the essential components for the initiation of protein synthesis. Stabilizes the binding of IF-2 and IF-3 on the 30S subunit to which N-formylmethionyl-tRNA(fMet) subsequently binds. Helps modulate mRNA selection, yielding the 30S pre-initiation complex (PIC). Upon addition of the 50S ribosomal subunit IF-1, IF-2 and IF-3 are released leaving the mature 70S translation initiation complex. This Psychromonas ingrahamii (strain DSM 17664 / CCUG 51855 / 37) protein is Translation initiation factor IF-1.